The primary structure comprises 162 residues: Troponin C, skeletal muscle (162 aa).

The residue at position 1 (Ala-1) is an N-acetylalanine. 4 EF-hand domains span residues 17–52 (EMIA…LGQT), 53–88 (PTKE…QMKE), 93–128 (KSEE…SGES), and 129–162 (ITDE…EGVQ). Asp-30, Asp-32, Asp-36, Glu-41, Asp-66, Asp-68, Ser-70, Thr-72, Glu-77, Asp-106, Asn-108, Asp-110, Tyr-112, Glu-117, Asp-142, Asn-144, Asp-146, Lys-148, and Glu-153 together coordinate Ca(2+).

This sequence belongs to the troponin C family.

Troponin is the central regulatory protein of striated muscle contraction. Tn consists of three components: Tn-I which is the inhibitor of actomyosin ATPase, Tn-T which contains the binding site for tropomyosin and Tn-C. The binding of calcium to Tn-C abolishes the inhibitory action of Tn on actin filaments. The chain is Troponin C, skeletal muscle from Pelophylax lessonae (Pool frog).